A 669-amino-acid polypeptide reads, in one-letter code: MSNQRVLYWPETYNNIKELGRGVSGVVYKASHKKTGQIVAIKLVDMKQSKISTEQIQGEIRALLTLNPENERTHINIIKLIQCFIHKTTAIFILEYVDGGTLEDFMYSFERGMPLSLISHCLYQSVNAIEYMNSKKCSHRDIKPANILMLRNRKPKLKQQSEQQQQEDGGYIRYSGQFQLEPSSQENNNYQFDPDELPILKVTDYGYASISGNDSAEIHSTLAGSPLYMAPEIIHIILSPFLEPGTGKLSADSSEGYNPLLVDVWAIGAVAFRLITGDDLISVIFPNLNQTTVLAALVNLAKMIDNGDFQKGLDSIPNEIRKYGLVDPDIELGISFITSLLQLDPKKRLPLKETLNHPFLAKGKLSFTQTLNQHYKDNKDVLGSIVPSDISNFLNQNQQQQQQQQKSFSTSSLPQVNHNNDTNNNNNNNNNNNNNNNNNNNNNNNNNNNNEKDKDNQSNNSSSSSSSSSPPSPTISKSSPSSLSSSLSPSSSTDDLPKAMKWSSSVKPPKKSNFAPTFLSHQRSDKITLFPKLLPPPTKDAPPLETMNWRSPPVEVGDSITWTTLTQDAIFQVQFSVLTSFLKVISASNSYQFRIITSLTKVPLEIAVSNHKDTILYMYNIVKSVIAPQLISLSNAFDENSIRSVLAAILYQIGTETEQAEIANCWTLV.

Residues 13-360 (YNNIKELGRG…LKETLNHPFL (348 aa)) enclose the Protein kinase domain. ATP-binding positions include 19–27 (LGRGVSGVV) and lysine 42. The active-site Proton acceptor is the aspartate 141. Over residues 396-405 (QNQQQQQQQQ) the composition is skewed to low complexity. 2 disordered regions span residues 396 to 518 (QNQQ…APTF) and 530 to 550 (FPKL…MNWR). A compositionally biased stretch (polar residues) spans 406 to 418 (KSFSTSSLPQVNH). Composition is skewed to low complexity over residues 419–449 (NNDT…NNNN) and 457–494 (QSNN…SSTD).

It belongs to the protein kinase superfamily. Ser/Thr protein kinase family.

It carries out the reaction L-seryl-[protein] + ATP = O-phospho-L-seryl-[protein] + ADP + H(+). The enzyme catalyses L-threonyl-[protein] + ATP = O-phospho-L-threonyl-[protein] + ADP + H(+). This chain is Probable serine/threonine-protein kinase DDB_G0291918, found in Dictyostelium discoideum (Social amoeba).